Reading from the N-terminus, the 92-residue chain is Small ribosomal subunit protein uS19 (92 aa).

Belongs to the universal ribosomal protein uS19 family.

Protein S19 forms a complex with S13 that binds strongly to the 16S ribosomal RNA. This Rickettsia canadensis (strain McKiel) protein is Small ribosomal subunit protein uS19.